Reading from the N-terminus, the 465-residue chain is Adenosylhomocysteinase (465 aa).

Threonine 56, aspartate 131, and glutamate 191 together coordinate substrate. Residue 192-194 (TTT) coordinates NAD(+). Substrate-binding residues include lysine 221 and aspartate 225. NAD(+) is bound by residues asparagine 226, 255-260 (GYGDVG), glutamate 278, asparagine 313, 334-336 (IGH), and asparagine 379.

It belongs to the adenosylhomocysteinase family. NAD(+) is required as a cofactor.

It localises to the cytoplasm. The catalysed reaction is S-adenosyl-L-homocysteine + H2O = L-homocysteine + adenosine. Its pathway is amino-acid biosynthesis; L-homocysteine biosynthesis; L-homocysteine from S-adenosyl-L-homocysteine: step 1/1. Functionally, may play a key role in the regulation of the intracellular concentration of adenosylhomocysteine. The sequence is that of Adenosylhomocysteinase from Chelativorans sp. (strain BNC1).